The primary structure comprises 218 residues: UPF0126 membrane protein SCO4104 (218 aa).

Helical transmembrane passes span 8 to 28 (LLAL…LTAV), 37 to 57 (GVVV…DVLI), 64 to 84 (AFLD…AFAV), 91 to 111 (LEPA…VIGA), 118 to 138 (GLAV…GGTI), 154 to 174 (LYAI…ETGV), and 179 to 199 (AALG…HFGI).

This sequence belongs to the UPF0126 family.

It localises to the cell membrane. In Streptomyces coelicolor (strain ATCC BAA-471 / A3(2) / M145), this protein is UPF0126 membrane protein SCO4104.